Here is a 517-residue protein sequence, read N- to C-terminus: E3 ubiquitin-protein ligase TRIM65 (517 aa).

At Ala-2 the chain carries N-acetylalanine. The RING-type zinc-finger motif lies at 12–51 (CAICLGLYQDPVTLPCGHNFCGACIRDWWDRCGKACPECR). A disordered region spans residues 75–94 (AGPARDPGPDPGPGPDPAAR). The B box-type zinc finger occupies 90-137 (DPAARCPRHGRPLELFCRTEGRCVCSVCTVRECRLHERALLDAERLKR). Zn(2+)-binding residues include Cys-95, His-98, Cys-117, and His-125. Residues 139–227 (AQLRASLEVT…QRLRVHLEAV (89 aa)) are a coiled coil. Ser-185 is modified (phosphoserine). A (Microbial infection) Glycyl lysine isopeptide (Lys-Gly) (interchain with G-Cter in ubiquitin) cross-link involves residue Lys-206. The 194-residue stretch at 313–506 (APVPSTVCPL…LTLCHQPGAV (194 aa)) folds into the B30.2/SPRY domain.

This sequence belongs to the TRIM/RBCC family. As to quaternary structure, homo-multimerizes. Interacts with ARRDC4.

It localises to the cytoplasm. It catalyses the reaction S-ubiquitinyl-[E2 ubiquitin-conjugating enzyme]-L-cysteine + [acceptor protein]-L-lysine = [E2 ubiquitin-conjugating enzyme]-L-cysteine + N(6)-ubiquitinyl-[acceptor protein]-L-lysine.. Its pathway is protein modification; protein ubiquitination. Functionally, E3 ubiquitin ligase that plays a role in several processes including innate immnity, autophagy or inflammation. Negatively regulates miRNAs by modulating the ubiquitination and stability of TNRC6A, a protein involved in RNA-mediated gene silencing by both micro-RNAs (miRNAs) and short interfering RNAs. This ubiquitination results in the suppressed expression of miR-138-5p leading to increased autophagy. Upon enteroviral infection, promotes 'Lys-63'-mediated ubiquitination activation of IFIH1/MDA5 leading to innate signaling cascade. Mechanistically, selectively recognizes MDA5 filaments that occur on dsRNAs. Plays also a role in limitation of inflammation through different mechanisms. First, promotes 'Lys-48'-mediated ubiquitination of VCAM1 leading to its degradation and limitation of LPS-induced lung inflammation. In addition, negatively regulates inflammasome activation by promoting 'lys48'-linked ubiquitination of NLRP3 which is critical for the inhibition of NLRP3 inflammasome activation in resting macrophages. This is E3 ubiquitin-protein ligase TRIM65 (TRIM65) from Homo sapiens (Human).